The following is a 425-amino-acid chain: Melibiose permease (425 aa).

Over 1–13 (MNTTTCTHKDNPN) the chain is Cytoplasmic. Residues 14 to 34 (FWIFGLFFFLYFFIMATCFPF) traverse the membrane as a helical segment. The Periplasmic portion of the chain corresponds to 35–50 (LPIWLSDIIGLNKTHT). The helical transmembrane segment at 51 to 71 (GIVFSCISLSAIAFQPVLGVI) threads the bilayer. Residues 72–80 (SDKLGLKKH) are Cytoplasmic-facing. A helical membrane pass occupies residues 81–101 (LLWIISVLLFLFAPFFLYVFA). The Periplasmic portion of the chain corresponds to 102–107 (PLLKTN). A helical transmembrane segment spans residues 108 to 128 (IWLGALSGGLYIGFVFSAGSG). Topologically, residues 129–149 (AIEAYIERVSRNSAFEYGKAR) are cytoplasmic. The helical transmembrane segment at 150–170 (MFGCLGWGLCASTGGILFGID) threads the bilayer. Residue Pro171 is a topological domain, periplasmic. A helical transmembrane segment spans residues 172–192 (SYVFWMGSAAALLLMLLLVVA). The Cytoplasmic segment spans residues 193-227 (KPKPNQTAQVMNALGANQPQITAKKVFNLFRQRRM). A helical membrane pass occupies residues 228-248 (WMFILYVIGVACVYDVFDQQF). The Periplasmic segment spans residues 249–267 (ATFFKTFFATPQEGTRAFG). A helical transmembrane segment spans residues 268–288 (FATTAGEICNAIIMFCSPWII). At 289–297 (NRIGAKNTL) the chain is on the cytoplasmic side. A helical membrane pass occupies residues 298–318 (LIAGLIMATRIIGSSFATTAV). Residues 319–325 (EVIALKM) are Periplasmic-facing. Residues 326-346 (LHALEVPFLLVGAFKYITGVF) traverse the membrane as a helical segment. The Cytoplasmic portion of the chain corresponds to 347-353 (DTRLSAT). The helical transmembrane segment at 354–374 (IYLIGFQFAKQSAAIFLSAFA) threads the bilayer. Over 375 to 385 (GNMYDRIGFQE) the chain is Periplasmic. Residues 386 to 406 (TYLMLGCFVLAITVVSAFTLS) traverse the membrane as a helical segment. Residues 407 to 425 (SRQEIAAAAGAAALTSQSR) lie on the Cytoplasmic side of the membrane.

It belongs to the major facilitator superfamily. Oligosaccharide:H(+) symporter (OHS) (TC 2.A.1.5) family.

It localises to the cell inner membrane. Functionally, responsible for transport of melibiose into the cell, with the concomitant import of a proton (symport system). Can also transport lactose, and has weak activity with maltose. Cannot transport the analog methyl-1-thio-beta,D-galactopyranoside (TMG). This chain is Melibiose permease, found in Enterobacter cloacae subsp. cloacae (strain ATCC 13047 / DSM 30054 / NBRC 13535 / NCTC 10005 / WDCM 00083 / NCDC 279-56).